A 313-amino-acid polypeptide reads, in one-letter code: tRNA dimethylallyltransferase (313 aa).

11–18 (GPTAGGKT) serves as a coordination point for ATP. A substrate-binding site is contributed by 13 to 18 (TAGGKT). Interaction with substrate tRNA regions lie at residues 36–39 (DSAL), 160–164 (QRIGR), and 243–248 (RCVGYR).

This sequence belongs to the IPP transferase family. As to quaternary structure, monomer. Requires Mg(2+) as cofactor.

The enzyme catalyses adenosine(37) in tRNA + dimethylallyl diphosphate = N(6)-dimethylallyladenosine(37) in tRNA + diphosphate. In terms of biological role, catalyzes the transfer of a dimethylallyl group onto the adenine at position 37 in tRNAs that read codons beginning with uridine, leading to the formation of N6-(dimethylallyl)adenosine (i(6)A). In Neisseria meningitidis serogroup B (strain ATCC BAA-335 / MC58), this protein is tRNA dimethylallyltransferase.